The following is a 350-amino-acid chain: D-alanine--D-alanine ligase (350 aa).

The 202-residue stretch at 143–344 (KRILSTFGIS…FKSLINKLIL (202 aa)) folds into the ATP-grasp domain. Position 172 to 227 (172 to 227 (INNIKFPCCIKPSNQGSSFGVNVANDFISLKESIDVAFLYSKKILIEPFIQGREIE)) interacts with ATP. 3 residues coordinate Mg(2+): aspartate 298, glutamate 311, and asparagine 313.

The protein belongs to the D-alanine--D-alanine ligase family. Requires Mg(2+) as cofactor. It depends on Mn(2+) as a cofactor.

The protein localises to the cytoplasm. It catalyses the reaction 2 D-alanine + ATP = D-alanyl-D-alanine + ADP + phosphate + H(+). The protein operates within cell wall biogenesis; peptidoglycan biosynthesis. Its function is as follows. Cell wall formation. The polypeptide is D-alanine--D-alanine ligase (Wigglesworthia glossinidia brevipalpis).